Consider the following 536-residue polypeptide: SNW domain-containing protein 1 (536 aa).

Residues 1–46 (MALTSFLPAPTQLSQDQLEAEEKARSQRSRQTSLVSSRREPPPYGY) form a disordered region. Ala-2 bears the N-acetylalanine mark. Ser-14 is subject to Phosphoserine. Lys-23 participates in a covalent cross-link: Glycyl lysine isopeptide (Lys-Gly) (interchain with G-Cter in SUMO2). The segment at 59–79 (GDGGAFPEIHVAQYPLDMGRK) is interaction with PPIL1. Residues Lys-81, Lys-97, Lys-115, Lys-122, Lys-141, Lys-158, and Lys-170 each participate in a glycyl lysine isopeptide (Lys-Gly) (interchain with G-Cter in SUMO2) cross-link. The segment at 174-339 (AQYIRYTPSQ…KARERRAGIK (166 aa)) is SNW. Phosphoserine is present on residues Ser-182 and Ser-190. Residue Lys-193 forms a Glycyl lysine isopeptide (Lys-Gly) (interchain with G-Cter in SUMO2) linkage. The segment at 209-234 (PPRFKINKKIPRGPPSPPAPVMHSPS) is disordered. Ser-224, Ser-232, and Ser-234 each carry phosphoserine. Residues Lys-240, Lys-258, Lys-286, Lys-339, Lys-344, Lys-416, and Lys-441 each participate in a glycyl lysine isopeptide (Lys-Gly) (interchain with G-Cter in SUMO2) cross-link. A disordered region spans residues 311-386 (KMAQKEKEKH…RSKLQRNENR (76 aa)). The residue at position 446 (Ser-446) is a Phosphoserine. A Glycyl lysine isopeptide (Lys-Gly) (interchain with G-Cter in SUMO2) cross-link involves residue Lys-452. 2 stretches are compositionally biased toward basic and acidic residues: residues 469-489 (TNRF…RGRE) and 503-530 (KFLE…EHEG). Residues 469–536 (TNRFVPDKEF…EHEGKKRRKE (68 aa)) form a disordered region. Ser-479 and Ser-481 each carry phosphoserine. A Glycyl lysine isopeptide (Lys-Gly) (interchain with G-Cter in SUMO2) cross-link involves residue Lys-509.

This sequence belongs to the SNW family. Identified in the spliceosome C complex. Associates with U4/U6-U5 tri-small nuclear ribonucleoproteins (U4/U6-U5 tri-snRNPs). Component of the minor spliceosome, which splices U12-type introns. Interacts with SKI, SMAD2,SMAD3, RBPJ, RB1, PABPN1, MAGEA1, SIRT1, FOXN3, U2AF2, PPIL1, DAXX and ATP1B4. Interacts with VDR and RXRA; preferentially associates with VDR:RXRA heterodimers. Interacts with NCOR2. Interacts with MAML1. Interacts with NOTCH1 NICD; the interaction involves multimerized NOTCH1 NICD. Forms a complex with NOTCH1 NICD and MAML1; the association is dissociated by RBPJ. Associates with positive transcription elongation factor b (P-TEFb). Component of the SNARP complex which consists at least of SNIP1, SNW1, THRAP3, BCLAF1 and PNN.

The protein resides in the nucleus. Functionally, involved in pre-mRNA splicing as component of the spliceosome. As a component of the minor spliceosome, involved in the splicing of U12-type introns in pre-mRNAs. Required in the specific splicing of CDKN1A pre-mRNA; the function probably involves the recruitment of U2AF2 to the mRNA. May recruit PPIL1 to the spliceosome. May be involved in cyclin-D1/CCND1 mRNA stability through the SNARP complex which associates with both the 3'end of the CCND1 gene and its mRNA. Involved in transcriptional regulation. Modulates TGF-beta-mediated transcription via association with SMAD proteins, MYOD1-mediated transcription via association with PABPN1, RB1-mediated transcriptional repression, and retinoid-X receptor (RXR)- and vitamin D receptor (VDR)-dependent gene transcription in a cell line-specific manner probably involving coactivators NCOA1 and GRIP1. Is involved in NOTCH1-mediated transcriptional activation. Binds to multimerized forms of Notch intracellular domain (NICD) and is proposed to recruit transcriptional coactivators such as MAML1 to form an intermediate preactivation complex which associates with DNA-bound CBF-1/RBPJ to form a transcriptional activation complex by releasing SNW1 and redundant NOTCH1 NICD. In Pongo abelii (Sumatran orangutan), this protein is SNW domain-containing protein 1 (SNW1).